The following is a 432-amino-acid chain: Putative D-alanyl-D-alanine carboxypeptidase (432 aa).

Residues 7–25 (ATVLLTFSLSAFAVEYPVL) traverse the membrane as a helical; Signal-anchor segment.

It belongs to the peptidase S12 family. YfeW subfamily.

The protein resides in the cell inner membrane. The catalysed reaction is Preferential cleavage: (Ac)2-L-Lys-D-Ala-|-D-Ala. Also transpeptidation of peptidyl-alanyl moieties that are N-acyl substituents of D-alanine.. This chain is Putative D-alanyl-D-alanine carboxypeptidase, found in Salmonella typhimurium (strain LT2 / SGSC1412 / ATCC 700720).